Reading from the N-terminus, the 884-residue chain is Protein P (884 aa).

Residues 1–184 are terminal protein domain (TP); it reads MHPFSRLFRN…GKPYSWEHRQ (184 aa). A spacer region spans residues 185-387; it reads LVQHNGQQHK…YCIHHIVSSL (203 aa). The tract at residues 299–345 is disordered; it reads RNSGHTTWFSSASNSNKSRSREKAYSSNSTSKRYSPPLNYEKSDFSS. Residues 388 to 729 form a polymerase/reverse transcriptase domain (RT) region; sequence DDWGPCTVTG…YEELWPVVRQ (342 aa). The 242-residue stretch at 398 to 639 folds into the Reverse transcriptase domain; it reads DVTIKSPRTP…NHLHFMGYVI (242 aa). The Mg(2+) site is built by D470, D590, and D591.

The protein belongs to the hepadnaviridae P protein family.

It catalyses the reaction DNA(n) + a 2'-deoxyribonucleoside 5'-triphosphate = DNA(n+1) + diphosphate. It carries out the reaction Endonucleolytic cleavage to 5'-phosphomonoester.. Its activity is regulated as follows. Activated by host HSP70 and HSP40 in vitro to be able to bind the epsilon loop of the pgRNA. Because deletion of the RNase H region renders the protein partly chaperone-independent, the chaperones may be needed indirectly to relieve occlusion of the RNA-binding site by this domain. Inhibited by several reverse-transcriptase inhibitors: Lamivudine, Adefovir and Entecavir. Functionally, multifunctional enzyme that converts the viral RNA genome into dsDNA in viral cytoplasmic capsids. This enzyme displays a DNA polymerase activity that can copy either DNA or RNA templates, and a ribonuclease H (RNase H) activity that cleaves the RNA strand of RNA-DNA heteroduplexes in a partially processive 3'- to 5'-endonucleasic mode. Neo-synthesized pregenomic RNA (pgRNA) are encapsidated together with the P protein, and reverse-transcribed inside the nucleocapsid. Initiation of reverse-transcription occurs first by binding the epsilon loop on the pgRNA genome, and is initiated by protein priming, thereby the 5'-end of (-)DNA is covalently linked to P protein. Partial (+)DNA is synthesized from the (-)DNA template and generates the relaxed circular DNA (RC-DNA) genome. After budding and infection, the RC-DNA migrates in the nucleus, and is converted into a plasmid-like covalently closed circular DNA (cccDNA). The activity of P protein does not seem to be necessary for cccDNA generation, and is presumably released from (+)DNA by host nuclear DNA repair machinery. In Marmota monax (Woodchuck), this protein is Protein P.